Consider the following 950-residue polypeptide: Zinc finger CCCH domain-containing protein 3 (950 aa).

Disordered regions lie at residues 32 to 106, 127 to 182, 201 to 220, and 314 to 489; these read GNSS…HPEP, IKPP…TKVG, VVKSVGRVSDSSPEHRRTVS, and SEKS…VLRK. Over residues 56 to 74 the composition is skewed to basic residues; sequence RPSRRGFSSHHGPSWRKKY. Residues 76–96 show a composition bias toward polar residues; it reads LVNQPVESSDPASDPAFQTSL. The span at 327-338 shows a compositional bias: polar residues; that stretch reads PRTTLESGNKAT. Positions 344–360 are enriched in basic and acidic residues; the sequence is KTEKPQPKVDPEVRPEK. Positions 370 to 388 are enriched in low complexity; that stretch reads SPSKYKWKASSPSASSSSS. The span at 402–412 shows a compositional bias: polar residues; it reads SQLSPVPSRPT. Position 405 is a phosphoserine (serine 405). Residues 438-449 show a composition bias toward basic residues; that stretch reads VKSRTKIIRRRG. Over residues 460–470 the composition is skewed to polar residues; sequence SPTTATTSKNH. 5 consecutive C3H1-type zinc fingers follow at residues 662–690, 694–717, 718–744, 745–772, and 773–795; these read EKKREYCMYYNRFGRCNRGECCPYIHDPE, VCTRFVRGTCKKTDGSCPFSHHVS, KEKMPVCSYFLKGICSNSNCPYSHVYV, SRKAEVCSDFLKGYCPLGAKCKKKHTLL, and CPDFARRGICPRGSQCQLLHRNQ. Residues 793–950 are disordered; that stretch reads RNQKRHGRRT…GKPLHIKPRL (158 aa). The span at 828–838 shows a compositional bias: polar residues; that stretch reads PTTTQRSVRQM. The segment covering 839–849 has biased composition (low complexity); the sequence is SSGLASGAEAP. Serine 851 and serine 855 each carry phosphoserine. Residues 857 to 888 are compositionally biased toward low complexity; it reads RVLASTSTLSSKATAASSPSPSPSTSSPAPSL. Polar residues predominate over residues 914 to 928; the sequence is SLHSSPSPGGQTETG. 3 positions are modified to phosphoserine: serine 918, serine 920, and serine 934.

Interacts with SMAD1, SMAD3, SMAD4, CPSF2 and CPSF3.

The protein resides in the nucleus. In terms of biological role, required for the export of polyadenylated mRNAs from the nucleus. Enhances ACVR1B-induced SMAD-dependent transcription. Binds to single-stranded DNA but not to double-stranded DNA in vitro. Involved in RNA cleavage. The polypeptide is Zinc finger CCCH domain-containing protein 3 (Zc3h3) (Mus musculus (Mouse)).